The primary structure comprises 408 residues: MAEVKLISAESVTEGHPDKICDQISDAILDDMLRQDPHSHVAVETSATKGQFWVFGEVTSKGYSDIQSIVRDTVRRIGYTSSVIGLDADSCGVLVSLSEQSPEINQGVSRIDSDRENAVSREERYEAQGAGDQGVMFGYASDETDVLMPLPIHLAHRLAYRLAEVRKNGEVKFLRPDGKTQVTIEYDEENRPLRVDTVLISTQHDPEVSQEALREDLREHVIEPVLDEVLGDAVKHDDYRVLVNPTGSFIMGGPAADAGLTGRKIIVDTYGGAAHHGGGAFSGKDPSKVDRSAAYAARWVAKNIVAAGLAHKVEVQVAYAIGVAEPVSINVETYGTEADGVTREQIQEAVRKVFDLRPAAIVDELDLLRPIYSKTAAYGHFGREDDDFTWEHTNKVDELKRAIATLVD.

His-16 contacts ATP. A Mg(2+)-binding site is contributed by Asp-18. Residue Glu-44 coordinates K(+). Glu-57 and Gln-100 together coordinate L-methionine. The flexible loop stretch occupies residues 100 to 110 (QSPEINQGVSR). ATP is bound by residues 177–179 (DGK), Asp-257, 263–264 (RK), Ala-280, and Lys-284. Asp-257 contacts L-methionine. Residue Lys-288 coordinates L-methionine.

The protein belongs to the AdoMet synthase family. In terms of assembly, homotetramer; dimer of dimers. Mg(2+) is required as a cofactor. The cofactor is K(+).

It localises to the cytoplasm. It catalyses the reaction L-methionine + ATP + H2O = S-adenosyl-L-methionine + phosphate + diphosphate. Its pathway is amino-acid biosynthesis; S-adenosyl-L-methionine biosynthesis; S-adenosyl-L-methionine from L-methionine: step 1/1. Its function is as follows. Catalyzes the formation of S-adenosylmethionine (AdoMet) from methionine and ATP. The overall synthetic reaction is composed of two sequential steps, AdoMet formation and the subsequent tripolyphosphate hydrolysis which occurs prior to release of AdoMet from the enzyme. This is S-adenosylmethionine synthase from Bifidobacterium animalis subsp. lactis (strain AD011).